Reading from the N-terminus, the 423-residue chain is GTPase Obg (423 aa).

The Obg domain maps to 1–158 (MFIDTARIYI…MWVRLELKLL (158 aa)). Positions 159–329 (ADVGLIGFPN…LLDKTIEILS (171 aa)) constitute an OBG-type G domain. Residues 165–172 (GFPNAGKS), 190–194 (FTTLT), 211–214 (DIPG), 281–284 (NKID), and 310–312 (SAL) contribute to the GTP site. 2 residues coordinate Mg(2+): Ser172 and Thr192. One can recognise an OCT domain in the interval 346 to 423 (TPPEEEETLN…VRDFEFEYYE (78 aa)).

This sequence belongs to the TRAFAC class OBG-HflX-like GTPase superfamily. OBG GTPase family. Monomer. Requires Mg(2+) as cofactor.

It is found in the cytoplasm. An essential GTPase which binds GTP, GDP and possibly (p)ppGpp with moderate affinity, with high nucleotide exchange rates and a fairly low GTP hydrolysis rate. Plays a role in control of the cell cycle, stress response, ribosome biogenesis and in those bacteria that undergo differentiation, in morphogenesis control. The chain is GTPase Obg from Thermoanaerobacter pseudethanolicus (strain ATCC 33223 / 39E) (Clostridium thermohydrosulfuricum).